The sequence spans 392 residues: Acetyl-CoA acetyltransferase (392 aa).

The Acyl-thioester intermediate role is filled by C85. Residues C206, S207, V209, and K332 each coordinate CoA. The Proton acceptor role is filled by H336.

It belongs to the thiolase-like superfamily. Thiolase family. Interacts with HMG-CoA synthase (HMGCS) that catalyzes the second step in the pathway and with a DUF35 protein. The acetoacetyl-CoA thiolase/HMG-CoA synthase complex channels the intermediate via a fused CoA-binding site, which allows for efficient coupling of the endergonic thiolase reaction with the exergonic HMGCS reaction.

The catalysed reaction is 2 acetyl-CoA = acetoacetyl-CoA + CoA. It participates in metabolic intermediate biosynthesis; (R)-mevalonate biosynthesis; (R)-mevalonate from acetyl-CoA: step 1/3. In terms of biological role, catalyzes the condensation of two acetyl-coA molecules into acetoacetyl-CoA. Functions in the mevalonate (MVA) pathway leading to isopentenyl diphosphate (IPP), a key precursor for the biosynthesis of isoprenoid compounds that are building blocks of archaeal membrane lipids. This is Acetyl-CoA acetyltransferase from Methanocaldococcus jannaschii (strain ATCC 43067 / DSM 2661 / JAL-1 / JCM 10045 / NBRC 100440) (Methanococcus jannaschii).